A 342-amino-acid chain; its full sequence is S-adenosylmethionine:tRNA ribosyltransferase-isomerase (342 aa).

This sequence belongs to the QueA family. As to quaternary structure, monomer.

It is found in the cytoplasm. It carries out the reaction 7-aminomethyl-7-carbaguanosine(34) in tRNA + S-adenosyl-L-methionine = epoxyqueuosine(34) in tRNA + adenine + L-methionine + 2 H(+). It participates in tRNA modification; tRNA-queuosine biosynthesis. In terms of biological role, transfers and isomerizes the ribose moiety from AdoMet to the 7-aminomethyl group of 7-deazaguanine (preQ1-tRNA) to give epoxyqueuosine (oQ-tRNA). The sequence is that of S-adenosylmethionine:tRNA ribosyltransferase-isomerase from Streptococcus pyogenes serotype M49 (strain NZ131).